A 190-amino-acid polypeptide reads, in one-letter code: NADH-quinone oxidoreductase subunit B (190 aa).

Cys-67, Cys-68, Cys-132, and Cys-162 together coordinate [4Fe-4S] cluster.

Belongs to the complex I 20 kDa subunit family. As to quaternary structure, NDH-1 is composed of 14 different subunits. Subunits NuoB, C, D, E, F, and G constitute the peripheral sector of the complex. It depends on [4Fe-4S] cluster as a cofactor.

Its subcellular location is the cell inner membrane. The catalysed reaction is a quinone + NADH + 5 H(+)(in) = a quinol + NAD(+) + 4 H(+)(out). Its function is as follows. NDH-1 shuttles electrons from NADH, via FMN and iron-sulfur (Fe-S) centers, to quinones in the respiratory chain. The immediate electron acceptor for the enzyme in this species is believed to be ubiquinone. Couples the redox reaction to proton translocation (for every two electrons transferred, four hydrogen ions are translocated across the cytoplasmic membrane), and thus conserves the redox energy in a proton gradient. In Anaplasma marginale (strain Florida), this protein is NADH-quinone oxidoreductase subunit B.